Consider the following 385-residue polypeptide: DNA double-strand break repair protein Mre11 (385 aa).

Asp-14, His-16, and Asp-58 together coordinate Mn(2+). Residue His-94 is the Proton donor of the active site. Mn(2+) is bound by residues His-180, His-216, and His-218.

The protein belongs to the MRE11/RAD32 family. As to quaternary structure, homodimer. Forms a heterotetramer composed of two Mre11 subunits and two Rad50 subunits. Homodimerization facilitates DNA binding. The cofactor is Mn(2+).

With respect to regulation, nuclease activity is regulated by Rad50. The mirin-derivative PFM39, specifically inhibits the 3'-5' exonuclease activity. The N-alkylated mirin-derivatives PFM03 and PFM01 specifically inhibit the endonuclease activity. Part of the Rad50/Mre11 complex, which is involved in the early steps of DNA double-strand break (DSB) repair. The complex may facilitate opening of the processed DNA ends to aid in the recruitment of HerA and NurA. Mre11 binds to DSB ends and has both double-stranded 3'-5' exonuclease activity and single-stranded endonuclease activity. The chain is DNA double-strand break repair protein Mre11 from Thermotoga maritima (strain ATCC 43589 / DSM 3109 / JCM 10099 / NBRC 100826 / MSB8).